The chain runs to 389 residues: Succinyl-diaminopimelate desuccinylase (389 aa).

A Zn(2+)-binding site is contributed by H72. D74 is an active-site residue. D105 is a binding site for Zn(2+). Catalysis depends on E144, which acts as the Proton acceptor. E145, E173, and H362 together coordinate Zn(2+).

Belongs to the peptidase M20A family. DapE subfamily. As to quaternary structure, homodimer. Zn(2+) serves as cofactor. Co(2+) is required as a cofactor.

It carries out the reaction N-succinyl-(2S,6S)-2,6-diaminopimelate + H2O = (2S,6S)-2,6-diaminopimelate + succinate. Its pathway is amino-acid biosynthesis; L-lysine biosynthesis via DAP pathway; LL-2,6-diaminopimelate from (S)-tetrahydrodipicolinate (succinylase route): step 3/3. In terms of biological role, catalyzes the hydrolysis of N-succinyl-L,L-diaminopimelic acid (SDAP), forming succinate and LL-2,6-diaminopimelate (DAP), an intermediate involved in the bacterial biosynthesis of lysine and meso-diaminopimelic acid, an essential component of bacterial cell walls. The protein is Succinyl-diaminopimelate desuccinylase of Nitrobacter hamburgensis (strain DSM 10229 / NCIMB 13809 / X14).